A 189-amino-acid polypeptide reads, in one-letter code: Putative 3-methyladenine DNA glycosylase (189 aa).

Belongs to the DNA glycosylase MPG family.

The protein is Putative 3-methyladenine DNA glycosylase (mag) of Corynebacterium glutamicum (strain ATCC 13032 / DSM 20300 / JCM 1318 / BCRC 11384 / CCUG 27702 / LMG 3730 / NBRC 12168 / NCIMB 10025 / NRRL B-2784 / 534).